Reading from the N-terminus, the 262-residue chain is Cytochrome c oxidase subunit 3 (262 aa).

6 consecutive transmembrane segments (helical) span residues 39–59 (YTMT…YQWW), 83–103 (GMIL…WAFF), 120–140 (VGIA…ILLA), 163–183 (GLFF…YEYI), 201–221 (ATGF…ICFL), and 240–260 (AWYW…IYWW).

It belongs to the cytochrome c oxidase subunit 3 family. Component of the cytochrome c oxidase (complex IV, CIV), a multisubunit enzyme composed of a catalytic core of 3 subunits and several supernumerary subunits. The complex exists as a monomer or a dimer and forms supercomplexes (SCs) in the inner mitochondrial membrane with ubiquinol-cytochrome c oxidoreductase (cytochrome b-c1 complex, complex III, CIII).

It localises to the mitochondrion inner membrane. It catalyses the reaction 4 Fe(II)-[cytochrome c] + O2 + 8 H(+)(in) = 4 Fe(III)-[cytochrome c] + 2 H2O + 4 H(+)(out). In terms of biological role, component of the cytochrome c oxidase, the last enzyme in the mitochondrial electron transport chain which drives oxidative phosphorylation. The respiratory chain contains 3 multisubunit complexes succinate dehydrogenase (complex II, CII), ubiquinol-cytochrome c oxidoreductase (cytochrome b-c1 complex, complex III, CIII) and cytochrome c oxidase (complex IV, CIV), that cooperate to transfer electrons derived from NADH and succinate to molecular oxygen, creating an electrochemical gradient over the inner membrane that drives transmembrane transport and the ATP synthase. Cytochrome c oxidase is the component of the respiratory chain that catalyzes the reduction of oxygen to water. Electrons originating from reduced cytochrome c in the intermembrane space (IMS) are transferred via the dinuclear copper A center (CU(A)) of subunit 2 and heme A of subunit 1 to the active site in subunit 1, a binuclear center (BNC) formed by heme A3 and copper B (CU(B)). The BNC reduces molecular oxygen to 2 water molecules using 4 electrons from cytochrome c in the IMS and 4 protons from the mitochondrial matrix. The polypeptide is Cytochrome c oxidase subunit 3 (COIII) (Anopheles gambiae (African malaria mosquito)).